Consider the following 93-residue polypeptide: Neutrophil cationic peptide 1 type A (93 aa).

Residues 1 to 19 form the signal peptide; that stretch reads MRTVPLFAACLLLTLMAQA. Residues 20–62 constitute a propeptide that is removed on maturation; it reads EPLPRAADHSDTKMKGDREDHVAVISFWEEESTSLEDAGAGAG. 3 cysteine pairs are disulfide-bonded: cysteine 65–cysteine 93, cysteine 67–cysteine 82, and cysteine 72–cysteine 92.

This sequence belongs to the alpha-defensin family.

The protein localises to the secreted. Has antibiotic, anti-fungi and antiviral activity. In Cavia porcellus (Guinea pig), this protein is Neutrophil cationic peptide 1 type A.